A 294-amino-acid chain; its full sequence is MAITAQMVKELREKTGAGMMDCKKALTETNGDMEKAIDWLREKGIAKAAKKADRIAAEGMTLVEVDGNTAVILEVNSETDFVAKNEAFQTLVKELAAHLLKHKPATLEEALGQTMDNGATVQEHINAAIAKIGEKITLRRFEIVEKGENDVFGAYLHMGGRIGVLTLLAGSANQEVAKDVAMHIAALHPKYVSRDQVPQEEINREREVLKQQALNEGKPEHIVEKMVEGRLNKFYEDICLLEQAFVKNPDVKVRQYVESNGATVKTFIRYEVGEGMEKRQDNFAEEVMNQMRKQ.

Residues 79-82 (TDFV) are involved in Mg(2+) ion dislocation from EF-Tu.

Belongs to the EF-Ts family.

Its subcellular location is the cytoplasm. Associates with the EF-Tu.GDP complex and induces the exchange of GDP to GTP. It remains bound to the aminoacyl-tRNA.EF-Tu.GTP complex up to the GTP hydrolysis stage on the ribosome. The polypeptide is Elongation factor Ts (Geobacillus sp. (strain WCH70)).